The following is a 322-amino-acid chain: Methionyl-tRNA formyltransferase (322 aa).

113–116 contributes to the (6S)-5,6,7,8-tetrahydrofolate binding site; the sequence is SLLP.

The protein belongs to the Fmt family.

The catalysed reaction is L-methionyl-tRNA(fMet) + (6R)-10-formyltetrahydrofolate = N-formyl-L-methionyl-tRNA(fMet) + (6S)-5,6,7,8-tetrahydrofolate + H(+). Its function is as follows. Attaches a formyl group to the free amino group of methionyl-tRNA(fMet). The formyl group appears to play a dual role in the initiator identity of N-formylmethionyl-tRNA by promoting its recognition by IF2 and preventing the misappropriation of this tRNA by the elongation apparatus. This chain is Methionyl-tRNA formyltransferase, found in Bacteroides thetaiotaomicron (strain ATCC 29148 / DSM 2079 / JCM 5827 / CCUG 10774 / NCTC 10582 / VPI-5482 / E50).